A 194-amino-acid polypeptide reads, in one-letter code: MTDIAVAEQTTKLIGPGRLVLVVGPSGAGKDTLINAARTLCADDPAIVFARRVVTREASAAEDNLQVTPDDFSRLEAAGDFALHWRAHGHAYGLPRGLDDDIRAGRTVVANVSRMVIDPARSAYANVVVVLITAPAEVLAARIAARARASDGSITDRVGRSVAAHPDVTISNVGDPIAHARDLLEIIRHGRPQP.

Position 24 to 31 (24 to 31 (GPSGAGKD)) interacts with ATP.

It belongs to the ribose 1,5-bisphosphokinase family.

The catalysed reaction is alpha-D-ribose 1,5-bisphosphate + ATP = 5-phospho-alpha-D-ribose 1-diphosphate + ADP. It participates in metabolic intermediate biosynthesis; 5-phospho-alpha-D-ribose 1-diphosphate biosynthesis; 5-phospho-alpha-D-ribose 1-diphosphate from D-ribose 5-phosphate (route II): step 3/3. Catalyzes the phosphorylation of ribose 1,5-bisphosphate to 5-phospho-D-ribosyl alpha-1-diphosphate (PRPP). This is Ribose 1,5-bisphosphate phosphokinase PhnN from Rhodopseudomonas palustris (strain ATCC BAA-98 / CGA009).